We begin with the raw amino-acid sequence, 397 residues long: Stearoyl-[acyl-carrier-protein] 9-desaturase, chloroplastic (397 aa).

Residues 1–33 (MALNFNAIASKSQKLPCFALPPKATLRSPKFSM) constitute a chloroplast transit peptide. Fe cation-binding residues include E138, E176, H179, E229, E262, and H265.

This sequence belongs to the fatty acid desaturase type 2 family. As to quaternary structure, homodimer. Requires Fe(2+) as cofactor.

The protein resides in the plastid. Its subcellular location is the chloroplast. The enzyme catalyses octadecanoyl-[ACP] + 2 reduced [2Fe-2S]-[ferredoxin] + O2 + 2 H(+) = (9Z)-octadecenoyl-[ACP] + 2 oxidized [2Fe-2S]-[ferredoxin] + 2 H2O. It functions in the pathway lipid metabolism; fatty acid metabolism. Converts stearoyl-ACP to oleoyl-ACP by introduction of a cis double bond between carbons 9 and 10 of the acyl chain. The chain is Stearoyl-[acyl-carrier-protein] 9-desaturase, chloroplastic from Gossypium hirsutum (Upland cotton).